A 252-amino-acid polypeptide reads, in one-letter code: Hydroxyacylglutathione hydrolase (252 aa).

Positions 54, 56, 58, 59, 111, 130, and 170 each coordinate Zn(2+).

This sequence belongs to the metallo-beta-lactamase superfamily. Glyoxalase II family. Monomer. Zn(2+) is required as a cofactor.

It catalyses the reaction an S-(2-hydroxyacyl)glutathione + H2O = a 2-hydroxy carboxylate + glutathione + H(+). It participates in secondary metabolite metabolism; methylglyoxal degradation; (R)-lactate from methylglyoxal: step 2/2. In terms of biological role, thiolesterase that catalyzes the hydrolysis of S-D-lactoyl-glutathione to form glutathione and D-lactic acid. This is Hydroxyacylglutathione hydrolase from Francisella tularensis subsp. holarctica (strain FTNF002-00 / FTA).